Consider the following 59-residue polypeptide: Pycsar effector protein MePycTM (59 aa).

Residues 36–56 (VAVAIYLLGAAMLSSGAAVLA) traverse the membrane as a helical segment.

The protein resides in the cell membrane. In terms of biological role, pycsar (pyrimidine cyclase system for antiphage resistance) provides immunity against bacteriophage. The pyrimidine cyclase (PycC) synthesizes cyclic nucleotides in response to infection; these serve as specific second messenger signals. The signals activate the adjacent effector, leading to bacterial cell death and abortive phage infection. A clade D Pycsar system. The effector gene of a two-gene Pycsar system. Expression of this and adjacent uridylate cyclase MePycC (AC A0A1C5G2V9) probably confers resistance to bacteriophage. The genes are probably only expressed in response to bacteriophage infection. Probably only responds to cUMP (produced by its cognate NTP cyclase), acts by impairing membrane integrity. The chain is Pycsar effector protein MePycTM from Micromonospora echinofusca.